A 552-amino-acid polypeptide reads, in one-letter code: Cholesterol oxidase (552 aa).

Residues 1–45 (MTDSRANRADATRGVASVSRRRFLAGAGLTAGAIALSSMSTSASA) constitute a signal peptide (tat-type signal). FAD-binding residues include Y66, G67, E86, G160, N164, G165, M167, and V295. Residues E406 and H492 each act as proton acceptor in the active site. FAD is bound by residues G520 and F532.

This sequence belongs to the GMC oxidoreductase family. The cofactor is FAD. Predicted to be exported by the Tat system. The position of the signal peptide cleavage has been experimentally proven.

The protein localises to the secreted. It catalyses the reaction cholesterol + O2 = cholest-5-en-3-one + H2O2. The catalysed reaction is cholest-5-en-3-one = cholest-4-en-3-one. It functions in the pathway steroid metabolism; cholesterol degradation. In terms of biological role, bifunctional enzyme that catalyzes the oxidation and isomerization of cholesterol to cholestenone (cholest-4-en-3-one), an initial step in the cholesterol degradation process. The chain is Cholesterol oxidase from Brevibacterium sterolicum.